A 290-amino-acid chain; its full sequence is ATP synthase gamma chain (290 aa).

Belongs to the ATPase gamma chain family. F-type ATPases have 2 components, CF(1) - the catalytic core - and CF(0) - the membrane proton channel. CF(1) has five subunits: alpha(3), beta(3), gamma(1), delta(1), epsilon(1). CF(0) has three main subunits: a, b and c.

Its subcellular location is the cell inner membrane. Functionally, produces ATP from ADP in the presence of a proton gradient across the membrane. The gamma chain is believed to be important in regulating ATPase activity and the flow of protons through the CF(0) complex. In Anaeromyxobacter dehalogenans (strain 2CP-1 / ATCC BAA-258), this protein is ATP synthase gamma chain.